The chain runs to 582 residues: ATP-dependent lipid A-core flippase (582 aa).

5 helical membrane-spanning segments follow: residues Leu-16 to Leu-36, Val-63 to Tyr-83, Ile-153 to Val-173, Pro-253 to Pro-273, and Val-275 to Met-295. In terms of domain architecture, ABC transmembrane type-1 spans Ile-28–Arg-310. Positions Val-342–Met-578 constitute an ABC transporter domain. Gly-376–Ser-383 contacts ATP.

Belongs to the ABC transporter superfamily. Lipid exporter (TC 3.A.1.106) family. Homodimer.

The protein localises to the cell inner membrane. It carries out the reaction ATP + H2O + lipid A-core oligosaccharideSide 1 = ADP + phosphate + lipid A-core oligosaccharideSide 2.. Involved in lipopolysaccharide (LPS) biosynthesis. Translocates lipid A-core from the inner to the outer leaflet of the inner membrane. Transmembrane domains (TMD) form a pore in the inner membrane and the ATP-binding domain (NBD) is responsible for energy generation. The polypeptide is ATP-dependent lipid A-core flippase (Escherichia coli O157:H7).